A 308-amino-acid chain; its full sequence is Protein translocase subunit SecF (308 aa).

Transmembrane regions (helical) follow at residues 22 to 42, 140 to 160, 164 to 184, 194 to 214, 246 to 266, and 272 to 292; these read AVSYSFSIILSLISFIWIGIY, IEAGAMAMLSSFLAIMVYIWV, WYFGLGILIALVHDVILALGF, LSTIAAVLTIIGYSVNDSVVI, ILTVITTLLANLALMLFGGEA, and VLVFFGIIAGTYSSIFISAPI.

This sequence belongs to the SecD/SecF family. SecF subfamily. Forms a complex with SecD. Part of the essential Sec protein translocation apparatus which comprises SecA, SecYEG and auxiliary proteins SecDF-YajC and YidC.

Its subcellular location is the cell inner membrane. Its function is as follows. Part of the Sec protein translocase complex. Interacts with the SecYEG preprotein conducting channel. SecDF uses the proton motive force (PMF) to complete protein translocation after the ATP-dependent function of SecA. The chain is Protein translocase subunit SecF from Rickettsia akari (strain Hartford).